Here is a 406-residue protein sequence, read N- to C-terminus: Cysteine desulfurase (406 aa).

Position 226 is an N6-(pyridoxal phosphate)lysine (Lys-226). Cys-364 acts as the Cysteine persulfide intermediate in catalysis.

Belongs to the class-V pyridoxal-phosphate-dependent aminotransferase family. Csd subfamily. Homodimer. Interacts with SufE and the SufBCD complex composed of SufB, SufC and SufD. The interaction with SufE is required to mediate the direct transfer of the sulfur atom from the S-sulfanylcysteine. Pyridoxal 5'-phosphate serves as cofactor.

It is found in the cytoplasm. It carries out the reaction (sulfur carrier)-H + L-cysteine = (sulfur carrier)-SH + L-alanine. The catalysed reaction is L-selenocysteine + AH2 = hydrogenselenide + L-alanine + A + H(+). The protein operates within cofactor biosynthesis; iron-sulfur cluster biosynthesis. In terms of biological role, cysteine desulfurases mobilize the sulfur from L-cysteine to yield L-alanine, an essential step in sulfur metabolism for biosynthesis of a variety of sulfur-containing biomolecules. Component of the suf operon, which is activated and required under specific conditions such as oxidative stress and iron limitation. Acts as a potent selenocysteine lyase in vitro, that mobilizes selenium from L-selenocysteine. Selenocysteine lyase activity is however unsure in vivo. This chain is Cysteine desulfurase, found in Salmonella dublin (strain CT_02021853).